A 413-amino-acid chain; its full sequence is Eukaryotic initiation factor 4A-11 (413 aa).

A Q motif motif is present at residues 40-68 (ESFDAMGLQENLLRGIYAYGFEKPSAIQQ). A Helicase ATP-binding domain is found at 71–241 (IVPFCKGLDV…RKFMNKPVRI (171 aa)). 84-91 (AQSGTGKT) serves as a coordination point for ATP. Residues 189-192 (DEAD) carry the DEAD box motif. Residues 252–413 (GIKQFYVNVD…ELPANVADLL (162 aa)) enclose the Helicase C-terminal domain.

The protein belongs to the DEAD box helicase family. eIF4A subfamily. In terms of assembly, eIF4F is a multi-subunit complex, the composition of which varies with external and internal environmental conditions. It is composed of at least EIF4A, EIF4E and EIF4G.

The catalysed reaction is ATP + H2O = ADP + phosphate + H(+). ATP-dependent RNA helicase which is a subunit of the eIF4F complex involved in cap recognition and is required for mRNA binding to ribosome. In the current model of translation initiation, eIF4A unwinds RNA secondary structures in the 5'-UTR of mRNAs which is necessary to allow efficient binding of the small ribosomal subunit, and subsequent scanning for the initiator codon. In Nicotiana tabacum (Common tobacco), this protein is Eukaryotic initiation factor 4A-11.